Reading from the N-terminus, the 559-residue chain is Paxillin (559 aa).

Positions 3–15 (DLDALLADLESTT) match the LD motif 1 motif. A disordered region spans residues 17–139 (HISKRPVFLT…SPTMTSTSLG (123 aa)). At Tyr-31 the chain carries Phosphotyrosine. A compositionally biased stretch (pro residues) spans 45-54 (VPPPVPPPPS). The span at 79 to 98 (QQPQSQSPIYSSSAKSSSAS) shows a compositional bias: low complexity. Tyr-118 carries the post-translational modification Phosphotyrosine; by FAK1. Polar residues predominate over residues 121–137 (PNKQKSAEPSPTMTSTS). An LD motif 2 motif is present at residues 144-156 (ELDRLLLELNAVQ). Disordered stretches follow at residues 158-213 (NPPS…GIED) and 225-262 (LESS…SASS). Residues 217–229 (SVESLLDELESSV) carry the LD motif 3 motif. Positions 237-262 (TVSQGEVSSPQRVNASQQQTRISASS) are enriched in polar residues. The tract at residues 263-282 (ATRELDELMASLSDFKFMAQ) is required for binding to PARVA and ILK. 2 consecutive short sequence motifs (LD motif) follow at residues 266-277 (ELDELMASLSDF) and 301-313 (QLDT…QSDL). The segment at 281 to 301 (AQGKAGGSSSPPSTTPKPGSQ) is disordered. 4 consecutive LIM zinc-binding domains span residues 326–376 (CGAC…CEKD), 385–435 (CYYC…CRKD), 444–494 (CGGC…CEVH), and 503–553 (CSGC…CQNC).

Interacts (via LD motif 4) with PARVA/PARVIN and ILK. Post-translationally, phosphorylated on tyrosine residues during integrin-mediated cell adhesion, embryonic development, fibroblast transformation and following stimulation of cells by mitogens.

It localises to the cytoplasm. The protein resides in the cytoskeleton. It is found in the cell junction. The protein localises to the focal adhesion. Its subcellular location is the cell cortex. Functionally, cytoskeletal protein involved in actin-membrane attachment at sites of cell adhesion to the extracellular matrix (focal adhesion). Binds in vitro to vinculin as well as to the SH3 domain of c-SRC and, when tyrosine phosphorylated, to the SH2 domain of v-CRK. The polypeptide is Paxillin (PXN) (Gallus gallus (Chicken)).